Here is a 369-residue protein sequence, read N- to C-terminus: NAD-dependent epimerase/dehydratase FUM13 (369 aa).

Tyr176 is a binding site for NADP(+).

This sequence belongs to the NAD(P)-dependent epimerase/dehydratase family. Dihydroflavonol-4-reductase subfamily.

Its pathway is mycotoxin biosynthesis. In terms of biological role, NAD-dependent epimerase/dehydratase; part of the gene cluster that mediates the biosynthesis of fumonisins B1 (FB1), B2 (FB2), B3 (FB3), and B4 (FB4), which are carcinogenic mycotoxins. Within the pathway, FUM13 stereospecifically reduces the intermediate 3-keto intermediate 2-amino-3-oxo-12,16-dimethylicosane to the 3-hydroxyl product 2-amino-3-hydroxy-12,16-dimethylicosane. The biosynthesis starts with the FUM1-catalyzed carbon chain assembly from one molecule of acetyl-CoA, eight molecules of malonyl-CoA, and two molecules of methionine (in S-adenosyl form). The C18 polyketide chain is released from the enzyme by a nucleophilic attack of a carbanion, which is derived from R-carbon of alanine by decarboxylation, on the carbonyl carbon of polyketide acyl chain. This step is catalyzed by the pyridoxal 5'-phosphate-dependent aminoacyl transferase FUM8. The resultant 3-keto intermediate is then stereospecifically reduced to a 3-hydroxyl product by reductase FUM13. Subsequent oxidations at C-10 by the cytochrome P450 monooxygenase FUM2, C-14 and C-15 by FUM6, FUM12 or FUM15, tricarballylic esterification of the hydroxyl groups on C-14 and C-15 by acyltransferase FUM14, and C-5 hydroxylation by 2-keto-glutarate-dependent dioxygenase FUM3 furnish the biosynthesis of fumonisins. The tricarballylic moieties are most likely derived from the citric acid cycle, and their addition to the carbon backbone may involve FUM7, FUM10, FUM11 and FUM14. The sequence is that of NAD-dependent epimerase/dehydratase FUM13 from Gibberella moniliformis (strain M3125 / FGSC 7600) (Maize ear and stalk rot fungus).